A 105-amino-acid polypeptide reads, in one-letter code: Urease subunit beta (105 aa).

It belongs to the urease beta subunit family. Heterotrimer of UreA (gamma), UreB (beta) and UreC (alpha) subunits. Three heterotrimers associate to form the active enzyme.

The protein resides in the cytoplasm. It carries out the reaction urea + 2 H2O + H(+) = hydrogencarbonate + 2 NH4(+). The protein operates within nitrogen metabolism; urea degradation; CO(2) and NH(3) from urea (urease route): step 1/1. This is Urease subunit beta from Mycobacterium sp. (strain JLS).